The sequence spans 447 residues: Tubulin beta chain (447 aa).

Residues Gln11, Glu69, Ser138, Gly142, Thr143, Gly144, Asn204, and Asn226 each coordinate GTP. Glu69 contacts Mg(2+). The interval 427–447 (DAGIDEEEEEYEEELPLEGEE) is disordered. Positions 429–447 (GIDEEEEEYEEELPLEGEE) are enriched in acidic residues.

The protein belongs to the tubulin family. In terms of assembly, dimer of alpha and beta chains. A typical microtubule is a hollow water-filled tube with an outer diameter of 25 nm and an inner diameter of 15 nM. Alpha-beta heterodimers associate head-to-tail to form protofilaments running lengthwise along the microtubule wall with the beta-tubulin subunit facing the microtubule plus end conferring a structural polarity. Microtubules usually have 13 protofilaments but different protofilament numbers can be found in some organisms and specialized cells. Mg(2+) is required as a cofactor.

It is found in the cytoplasm. Its subcellular location is the cytoskeleton. Tubulin is the major constituent of microtubules, a cylinder consisting of laterally associated linear protofilaments composed of alpha- and beta-tubulin heterodimers. Microtubules grow by the addition of GTP-tubulin dimers to the microtubule end, where a stabilizing cap forms. Below the cap, tubulin dimers are in GDP-bound state, owing to GTPase activity of alpha-tubulin. This chain is Tubulin beta chain (TUB2), found in Hapsidospora chrysogena (Acremonium chrysogenum).